Consider the following 661-residue polypeptide: UvrABC system protein C (661 aa).

Residues 25–104 (AEPGCYLMRD…IKNHQPHFNV (80 aa)) enclose the GIY-YIG domain. A UVR domain is found at 214-249 (DELQHLLQEQMERYAERMDYESAARVRDQLQGLDQL). Over residues 636–652 (FFHPSDEGTDADARAAL) the composition is skewed to basic and acidic residues. A disordered region spans residues 636–661 (FFHPSDEGTDADARAALEEQPQELSA).

It belongs to the UvrC family. In terms of assembly, interacts with UvrB in an incision complex.

The protein resides in the cytoplasm. Its function is as follows. The UvrABC repair system catalyzes the recognition and processing of DNA lesions. UvrC both incises the 5' and 3' sides of the lesion. The N-terminal half is responsible for the 3' incision and the C-terminal half is responsible for the 5' incision. The polypeptide is UvrABC system protein C (Synechococcus sp. (strain CC9605)).